Reading from the N-terminus, the 87-residue chain is uncharacterized protein (87 aa).

The helical transmembrane segment at phenylalanine 25–serine 47 threads the bilayer.

The protein resides in the membrane. This is an uncharacterized protein from Bacillus subtilis (strain 168).